Consider the following 308-residue polypeptide: HTH-type transcriptional regulator SsuR (308 aa).

The HTH lysR-type domain maps to 1–59 (MNFQQLRFVREAVRQNMNLTEVANVLYTSQSGVSKQIKDLEDELGVDIFIRRGKRLTGL). A DNA-binding region (H-T-H motif) is located at residues 19–38 (LTEVANVLYTSQSGVSKQIK).

It belongs to the LysR transcriptional regulatory family.

Functionally, transcriptional regulator that is essential for the utilization of a number of organic sulfur sources of either environmental or human origin. Required for aliphatic sulfonate utilization. Binds to DNA at target promoter regions. Targets include the ssuDBC operon, the tauABC operon, three tauD-type genes and atsA. The protein is HTH-type transcriptional regulator SsuR of Burkholderia cenocepacia (strain ATCC BAA-245 / DSM 16553 / LMG 16656 / NCTC 13227 / J2315 / CF5610) (Burkholderia cepacia (strain J2315)).